A 213-amino-acid chain; its full sequence is Peptidyl-tRNA hydrolase (213 aa).

Position 26 (Y26) interacts with tRNA. The active-site Proton acceptor is H31. TRNA is bound by residues Y78, N80, and N126.

This sequence belongs to the PTH family. As to quaternary structure, monomer.

The protein resides in the cytoplasm. The catalysed reaction is an N-acyl-L-alpha-aminoacyl-tRNA + H2O = an N-acyl-L-amino acid + a tRNA + H(+). Its function is as follows. Hydrolyzes ribosome-free peptidyl-tRNAs (with 1 or more amino acids incorporated), which drop off the ribosome during protein synthesis, or as a result of ribosome stalling. Catalyzes the release of premature peptidyl moieties from peptidyl-tRNA molecules trapped in stalled 50S ribosomal subunits, and thus maintains levels of free tRNAs and 50S ribosomes. This is Peptidyl-tRNA hydrolase from Trichormus variabilis (strain ATCC 29413 / PCC 7937) (Anabaena variabilis).